Consider the following 177-residue polypeptide: Ribosome maturation factor RimM (177 aa).

The 75-residue stretch at 92 to 166 folds into the PRC barrel domain; sequence EDTFYHADLM…RIVVVPDTNP (75 aa).

Belongs to the RimM family. Binds ribosomal protein uS19.

The protein localises to the cytoplasm. Functionally, an accessory protein needed during the final step in the assembly of 30S ribosomal subunit, possibly for assembly of the head region. Essential for efficient processing of 16S rRNA. May be needed both before and after RbfA during the maturation of 16S rRNA. It has affinity for free ribosomal 30S subunits but not for 70S ribosomes. This is Ribosome maturation factor RimM from Azorhizobium caulinodans (strain ATCC 43989 / DSM 5975 / JCM 20966 / LMG 6465 / NBRC 14845 / NCIMB 13405 / ORS 571).